The sequence spans 1882 residues: MFSFFKQIFKSLKKFFFLLFGIIFVLFSIIFLETSILQLSNNLVNTYTALVQKTNSSDIVAPAIFKESSPVYKTELKEEKRHFSKIKLTEKKINFIWPYQESDFGSDSEKKDSTTKSSDNNPRKGDVNDKDKLFLARKRGILKAYGEANIAEKRIYKGLAVSFQNTYSFTGTDQESNNLNQNTVSDPQNLIYDKEGNLLGYFVDGLILDGIPLRAGIARFPGDKGKGEDKKTTKKKSEIKQASSATTVLQPLAAQAKMTDAKETTNNEEPKKDSNVEEQYTTNNKDKVWFKSDETQAGSSSGESETSKLSTSYLFTGGQEAANWFPNLYANVPIVLPISPGSQFWLETNPFKEIIEVFQKEKEEKEKQSFSLTFTLDTSKLSHLDKEEFDWLEKQAETISSGSSFGDYNLKKKINSLKSFELNINKDWLKNKVKAEKETILDSLPGFSNSDKNTIFSTQSGDAKSGTQSNPSSLIALRSSVSFKPQLQQTNVALAQQQQDKQESSADDGVKDPTFSDVQTEFDKIGTENHTPQKNLNNVYAALLHQWKSIFQEDLVKKVTALLEKYRDAFLKAKALKELEFSRQNLAIATNVSSEESASFLVSNKDSQKYNDLSIIEGINFKSWLAKEKSNPLDMVYGGKSNSEGFLEKVEYEFKPTQTDEKKKAAAKTTQGTTDSLTQLADASSSSSSSSTGDTKSTSTKFQIYPKLANILAQAQLPEASSIPDTLTNAIKQWSTLDKKGFEALDDTGKSKAANNYVALLSYFTPEFQDPNELVVTNRQKLDIPIIFKNGVNPLTLPTDQQSLVVQTPEAHGAVVSQQWLFKHDKEVLPLEGEYSWKEALENPKNLPNWLNDLPDKYKFSINGLTFAILGVGESVETGYPVLSTNSPLPNSQDEGLIFLNEQGYRSVLFAVPAASEENYYAFKSDDIKAKFPGQDPIQVVASKLKGYLNVPDSDLAFNVKDISKFQYLTTARNYFPDLVQNYLAIASVVIAAFLSILALYLTILLIKSFIKKNQTEFSIIRAGGFSTAKFIAGMSVFAGIVALASSFFGVLFAFLLERQVKGIISRYWFIALPANSFNWISFFGSMLLIFVIFQFISWIAFKQLFSKPVNVLIDQGNETKFSVFLHLLKRKSYTMTPLGKFRVSLIISRLSRLFTYVGLSSIALLLIGIAGTIPQKFGAAQSNTVLNRNFNYRLNLQTPTEQSGWYAIQPYSRFGQTDDSLGIKALYKDKGDQIQQQQQQQQQQGNDKEHPYNLKELKISDRGGNPIKHNGKEIELGNLLLPSFGGAQQLNTDENFFRHASLSKWLIDFPIRVGGANINPWEIVEKSIPKQITQLLSASSDQFLIAVLTDDYFNNLNNNGFLTRNPRTNFIQLDAARVLTQINVFNPGGVKFNEQFLKFLTKVYGDPELSYQDSKLTYGIVPVDPQIEETYTYVQGPFGFKETELNPDSPYTLTGISPDSKFVNLTDSGGNSLRSLISSDSEMNVIVNAGFQYANNTKIGDFIFIQPKNTATRYSEKFLKSPPKTPTVKFRVVGVSTDAFGQELYINQNIANRLLKLNGFDGRGVIKDVVKDGQSTDDSGGTSSGGGSCGGGSTSSTTKDKYKIEYVKPTGYVPFNGVFSKELNPSLVSKALVLNSNIGVWGNFTDFGNNFTNLVKGKENKIITSILPSDPDILKQLAKEKGENGVDSMTYENLRKKVIEKYTSEWSSTQSLASGARGIFGDNIMVPALKLDAAGASAQIIRNNAEVLFNTVNQVDGFLLGTIIPFIFITCVVLGISMLEEMKRIFISLKSIGYKDSQNLVSLLCFFIPAFVLSLLISIAILAGLLVGVQALVFGVAQVFLTNVFEFLPYMVGIVLFGATIFVIGSYFWIKLRSAELKEGF.

Residues 16–36 traverse the membrane as a helical segment; the sequence is FFLLFGIIFVLFSIIFLETSI. Disordered regions lie at residues 103–129, 220–306, 492–513, and 658–698; these read DFGS…DVND, FPGD…ESET, VALA…VKDP, and QTDE…TKST. The span at 221–239 shows a compositional bias: basic and acidic residues; sequence PGDKGKGEDKKTTKKKSEI. Positions 240–249 are enriched in polar residues; that stretch reads KQASSATTVL. Composition is skewed to basic and acidic residues over residues 259–275, 284–294, and 500–511; these read TDAK…KDSN, NKDKVWFKSDE, and DKQESSADDGVK. The segment covering 667–698 has biased composition (low complexity); sequence AKTTQGTTDSLTQLADASSSSSSSSTGDTKST. The next 4 helical transmembrane spans lie at 987-1007, 1037-1057, 1080-1100, and 1154-1174; these read ASVV…ILLI, VFAG…AFLL, WISF…ISWI, and LFTY…AGTI. Disordered regions lie at residues 1233–1253 and 1572–1598; these read DQIQ…EHPY and KDGQ…TSST. A compositionally biased stretch (low complexity) spans 1234-1245; it reads QIQQQQQQQQQQ. Positions 1583–1594 are enriched in gly residues; it reads TSSGGGSCGGGS. The next 4 helical transmembrane spans lie at 1759-1779, 1807-1827, 1828-1848, and 1851-1871; these read FLLG…GISM, FFIP…AGLL, VGVQ…VFEF, and YMVG…YFWI.

Belongs to the ABC-4 integral membrane protein family.

It is found in the cell membrane. This is an uncharacterized protein from Mycoplasma pneumoniae (strain ATCC 29342 / M129 / Subtype 1) (Mycoplasmoides pneumoniae).